A 199-amino-acid polypeptide reads, in one-letter code: Lipid A acyltransferase PagP (199 aa).

An N-terminal signal peptide occupies residues 1-25 (MNYKDIINACILSGVFLLHSPSALA). Residues His-74, Asp-117, and Ser-118 contribute to the active site.

Belongs to the lipid A palmitoyltransferase family. As to quaternary structure, homodimer.

The protein localises to the cell outer membrane. It carries out the reaction a lipid A + a 1,2-diacyl-sn-glycero-3-phosphocholine = a hepta-acyl lipid A + a 2-acyl-sn-glycero-3-phosphocholine. It catalyses the reaction a lipid IVA + a 1,2-diacyl-sn-glycero-3-phosphocholine = a lipid IVB + a 2-acyl-sn-glycero-3-phosphocholine. The enzyme catalyses a lipid IIA + a 1,2-diacyl-sn-glycero-3-phosphocholine = a lipid IIB + a 2-acyl-sn-glycero-3-phosphocholine. Functionally, transfers a fatty acid residue from the sn-1 position of a phospholipid to the N-linked hydroxyfatty acid chain on the proximal unit of lipid A or its precursors. This chain is Lipid A acyltransferase PagP, found in Yersinia pestis bv. Antiqua (strain Antiqua).